The following is a 155-amino-acid chain: UPF0178 protein Clos_2709 (155 aa).

Belongs to the UPF0178 family.

The protein is UPF0178 protein Clos_2709 of Alkaliphilus oremlandii (strain OhILAs) (Clostridium oremlandii (strain OhILAs)).